A 398-amino-acid chain; its full sequence is Digeranylgeranylglycerophospholipid reductase (398 aa).

Positions 15, 34, 45, 46, 48, 99, 123, 280, 292, and 293 each coordinate FAD. Val372 is an a 2,3-bis-O-(geranylgeranyl)-sn-glycerol 1-phospholipid binding site.

Belongs to the geranylgeranyl reductase family. DGGGPL reductase subfamily. FAD is required as a cofactor.

The catalysed reaction is a 2,3-bis-O-phytanyl-sn-glycerol 1-phospholipid + 8 oxidized 2[4Fe-4S]-[ferredoxin] = a 2,3-bis-O-(geranylgeranyl)-sn-glycerol 1-phospholipid + 8 reduced 2[4Fe-4S]-[ferredoxin] + 16 H(+). It carries out the reaction 2,3-bis-O-(phytanyl)-sn-glycerol 1-phosphate + 8 oxidized 2[4Fe-4S]-[ferredoxin] = 2,3-bis-O-(geranylgeranyl)-sn-glycerol 1-phosphate + 8 reduced 2[4Fe-4S]-[ferredoxin] + 16 H(+). It catalyses the reaction a 2,3-bis-O-phytanyl-sn-glycerol 1-phospholipid + 8 A = a 2,3-bis-O-(geranylgeranyl)-sn-glycerol 1-phospholipid + 8 AH2. The enzyme catalyses CDP-2,3-bis-O-(geranylgeranyl)-sn-glycerol + 8 AH2 = CDP-2,3-bis-O-(phytanyl)-sn-glycerol + 8 A. The catalysed reaction is archaetidylserine + 8 AH2 = 2,3-bis-O-phytanyl-sn-glycero-3-phospho-L-serine + 8 A. Its pathway is membrane lipid metabolism; glycerophospholipid metabolism. In terms of biological role, is involved in the reduction of 2,3-digeranylgeranylglycerophospholipids (unsaturated archaeols) into 2,3-diphytanylglycerophospholipids (saturated archaeols) in the biosynthesis of archaeal membrane lipids. Catalyzes the formation of archaetidic acid (2,3-di-O-phytanyl-sn-glyceryl phosphate) from 2,3-di-O-geranylgeranylglyceryl phosphate (DGGGP) via the hydrogenation of each double bond of the isoprenoid chains. Is also probably able to reduce double bonds of geranyl groups in CDP-2,3-bis-O-(geranylgeranyl)-sn-glycerol and archaetidylserine, thus acting at various stages in the biosynthesis of archaeal membrane lipids. The chain is Digeranylgeranylglycerophospholipid reductase from Methanoculleus marisnigri (strain ATCC 35101 / DSM 1498 / JR1).